The sequence spans 507 residues: Histidine ammonia-lyase (507 aa).

The 5-imidazolinone (Ala-Gly) cross-link spans 141–143 (ASG). The residue at position 142 (S142) is a 2,3-didehydroalanine (Ser).

The protein belongs to the PAL/histidase family. Contains an active site 4-methylidene-imidazol-5-one (MIO), which is formed autocatalytically by cyclization and dehydration of residues Ala-Ser-Gly.

It is found in the cytoplasm. The catalysed reaction is L-histidine = trans-urocanate + NH4(+). It participates in amino-acid degradation; L-histidine degradation into L-glutamate; N-formimidoyl-L-glutamate from L-histidine: step 1/3. This is Histidine ammonia-lyase from Paraburkholderia phytofirmans (strain DSM 17436 / LMG 22146 / PsJN) (Burkholderia phytofirmans).